The primary structure comprises 23 residues: Magainin-R2 (23 aa).

In terms of tissue distribution, expressed by the skin glands.

Its subcellular location is the secreted. Antimicrobial peptide. This is Magainin-R2 from Xenopus ruwenzoriensis (Uganda clawed frog).